A 467-amino-acid chain; its full sequence is Iroquois-class homeodomain protein irx-1-A (467 aa).

Residues 126–188 (DPGRPKNATR…NARRRLKKEN (63 aa)) constitute a DNA-binding region (homeobox; TALE-type). 3 disordered regions span residues 197–306 (KEDD…PPHS), 318–344 (TSPDGALKSSPPPSQGNHTSPPIQHPA), and 410–467 (SLSS…LPSA). Composition is skewed to acidic residues over residues 215-225 (EDDEEIDLESI) and 233-244 (NDGEQSNEEEDE). Basic and acidic residues predominate over residues 245–262 (KLEHLRQGEKESLKKESE). Positions 415–431 (KTPERTSPKHSDRENVP) are enriched in basic and acidic residues. Residues 447–460 (RENTLSQQEGTSRI) are compositionally biased toward polar residues.

This sequence belongs to the TALE/IRO homeobox family. Expressed early in neural differentiation in the neural plate, and expression continues in the neural tube after neural fold closure. Expressed in the presumptive midbrain territory. Also expressed in the prospective neural crest and the preplacodal field, anterior to the neural plate. Strongly expressed in the profundal placode and weakly expressed in the trigeminal placode. Also expressed in the mesoderm in the Spemann organizer from the start of gastrulation, and subsequently in its derivatives; namely in the notochord as well as in the somites of stage 25 embryos, and the somites and notochord of tailbud embryos. Also expressed in specific and overlapping dynamic patterns with irx2 and irx3 during pronephric kidney development. Renal expression begins in the dorsal region of the pronephric anlage at mid neurula stage and continues to at least tailbud stages where expression is confined to the intermediate tubule segment IT1. Renal expression is maintained at tadpole stages.

It is found in the nucleus. Acts partially redundantly with other irx members in neural patterning. Required for formation of the posterior forebrain, midbrain, hindbrain, and to a lesser extent, spinal cord. Acts early in neural plate development to induce expression of some but not all proneural genes, and specify a neural precursor state. Also up-regulates repressors that prevent neuronal differentiation. Patterns the neuroectoderm in both the anterior/posterior and dorsal/ventral axes. Acts primarily as a transcriptional repressor during neural development, and binds to the bmp4 promoter to repress gene expression and thus mediate down-regulation of bmp4 by wnt signaling. Controls multiple processes through bmp4-repression including neural plate development, neural crest specification and Spemann organizer development. Involved in the specification of the preplacodal field at the anterior border of the neural plate. Regulates the genetic cascade of interactions that are necessary for positioning the isthmus organizer and the formation of the midbrain-hindbrain boundary. Required during at least two stages of pronephros kidney development; during neurula stages, maintains transcription of key renal genes to define the size and identity of the pronephric anlage, probably in part through regulation of bmp-signaling. Subsequently required for proper formation of the intermediate tubule segment of the pronephros. Acts principally as a transcriptional activator during pronephros development. The chain is Iroquois-class homeodomain protein irx-1-A (irx1-a) from Xenopus laevis (African clawed frog).